A 214-amino-acid chain; its full sequence is Glycine-rich protein 2 (214 aa).

Residues 8-75 (RAKGTVKWFS…RTKAVDVTGP (68 aa)) enclose the CSD domain. Residues 54–91 (TVEFEVESGGDGRTKAVDVTGPDGAAVQGGRGGGGGGG) form a disordered region. Over residues 80–91 (VQGGRGGGGGGG) the composition is skewed to gly residues. 2 CCHC-type zinc fingers span residues 157-174 (SGCF…DCSQ) and 194-211 (GGCY…ECTS).

The sequence is that of Glycine-rich protein 2 (GRP-2) from Nicotiana sylvestris (Wood tobacco).